A 152-amino-acid chain; its full sequence is Large ribosomal subunit protein bL9 (152 aa).

Belongs to the bacterial ribosomal protein bL9 family.

Its function is as follows. Binds to the 23S rRNA. The polypeptide is Large ribosomal subunit protein bL9 (Synechocystis sp. (strain ATCC 27184 / PCC 6803 / Kazusa)).